A 549-amino-acid chain; its full sequence is Hydroxylamine reductase (549 aa).

Cysteine 5, cysteine 8, cysteine 17, and cysteine 23 together coordinate [4Fe-4S] cluster. Positions 243, 267, 311, 403, 431, 456, 491, and 493 each coordinate hybrid [4Fe-2O-2S] cluster. Cysteine 403 carries the post-translational modification Cysteine persulfide.

It belongs to the HCP family. Requires [4Fe-4S] cluster as cofactor. Hybrid [4Fe-2O-2S] cluster is required as a cofactor.

It localises to the cytoplasm. It carries out the reaction A + NH4(+) + H2O = hydroxylamine + AH2 + H(+). Catalyzes the reduction of hydroxylamine to form NH(3) and H(2)O. The sequence is that of Hydroxylamine reductase from Desulfitobacterium hafniense (strain DSM 10664 / DCB-2).